The chain runs to 221 residues: Urease accessory protein UreF (221 aa).

The protein belongs to the UreF family. UreD, UreF and UreG form a complex that acts as a GTP-hydrolysis-dependent molecular chaperone, activating the urease apoprotein by helping to assemble the nickel containing metallocenter of UreC. The UreE protein probably delivers the nickel.

It localises to the cytoplasm. In terms of biological role, required for maturation of urease via the functional incorporation of the urease nickel metallocenter. The protein is Urease accessory protein UreF of Teredinibacter turnerae (strain ATCC 39867 / T7901).